The following is a 357-amino-acid chain: 3-isopropylmalate dehydrogenase (357 aa).

Substrate-binding residues include Arg97, Arg107, Arg135, and Asp224. Residues Asp224, Asp248, and Asp252 each coordinate Mg(2+). 282-294 (GSAPDIAGQDKAN) lines the NAD(+) pocket.

This sequence belongs to the isocitrate and isopropylmalate dehydrogenases family. LeuB type 1 subfamily. As to quaternary structure, homodimer. Mg(2+) serves as cofactor. It depends on Mn(2+) as a cofactor.

The protein localises to the cytoplasm. It carries out the reaction (2R,3S)-3-isopropylmalate + NAD(+) = 4-methyl-2-oxopentanoate + CO2 + NADH. It participates in amino-acid biosynthesis; L-leucine biosynthesis; L-leucine from 3-methyl-2-oxobutanoate: step 3/4. In terms of biological role, catalyzes the oxidation of 3-carboxy-2-hydroxy-4-methylpentanoate (3-isopropylmalate) to 3-carboxy-4-methyl-2-oxopentanoate. The product decarboxylates to 4-methyl-2 oxopentanoate. This is 3-isopropylmalate dehydrogenase from Synechococcus sp. (strain CC9902).